The chain runs to 985 residues: DNA repair protein REV1 (985 aa).

The 89-residue stretch at 161 to 249 folds into the BRCT domain; the sequence is QSSKIFKNCV…RLLPWQNYSL (89 aa). The tract at residues 319 to 329 is interaction with target DNA; that stretch reads YFAHSRLHHLS. DCTP contacts are provided by residues Arg324 and 362 to 366; that span reads DFDCF. One can recognise a UmuC domain in the interval 358 to 554; it reads IFHIDFDCFF…FKLDDLPGVG (197 aa). Positions 362 and 363 each coordinate Mg(2+). The tract at residues 395–397 is interaction with target DNA; it reads TKN. DCTP contacts are provided by residues 402–408, Asn414, and Asp467; that span reads SCNYVAR. Mg(2+) is bound by residues Asp467 and Glu468. Interaction with target DNA stretches follow at residues 554–557 and 620–628; these read GHST and RKSLSIDIN.

It belongs to the DNA polymerase type-Y family. As to quaternary structure, interacts with REV7. Mg(2+) is required as a cofactor.

The protein localises to the nucleus. The protein resides in the mitochondrion. Its function is as follows. Deoxycytidyl transferase involved in DNA repair. Transfers a dCMP residue from dCTP to the 3'-end of a DNA primer in a template-dependent reaction. May assist in the first step in the bypass of abasic lesions by the insertion of a nucleotide opposite the lesion. Required for normal induction of mutations by physical and chemical agents. Involved in mitochondrial DNA mutagenesis. The polypeptide is DNA repair protein REV1 (REV1) (Saccharomyces cerevisiae (strain ATCC 204508 / S288c) (Baker's yeast)).